A 185-amino-acid chain; its full sequence is Elongation factor P (185 aa).

It belongs to the elongation factor P family.

It is found in the cytoplasm. The protein operates within protein biosynthesis; polypeptide chain elongation. Involved in peptide bond synthesis. Stimulates efficient translation and peptide-bond synthesis on native or reconstituted 70S ribosomes in vitro. Probably functions indirectly by altering the affinity of the ribosome for aminoacyl-tRNA, thus increasing their reactivity as acceptors for peptidyl transferase. The sequence is that of Elongation factor P from Bacillus cereus (strain ATCC 10987 / NRS 248).